Reading from the N-terminus, the 314-residue chain is 3'-5' exoribonuclease YhaM (314 aa).

Positions 14 to 90 (VDLYLLIKSS…QLKLRNIRPA (77 aa)) form a DNA-binding region, OB. The HD domain occupies 163–279 (HVVSMLNLAK…LHYIDNLDAK (117 aa)).

Belongs to the YhaM family.

Its function is as follows. Shows a 3'-5' exoribonuclease activity. The sequence is that of 3'-5' exoribonuclease YhaM from Bacillus licheniformis (strain ATCC 14580 / DSM 13 / JCM 2505 / CCUG 7422 / NBRC 12200 / NCIMB 9375 / NCTC 10341 / NRRL NRS-1264 / Gibson 46).